The chain runs to 1326 residues: Coiled-coil domain-containing protein 171 (1326 aa).

Coiled coils occupy residues 53–294, 323–391, 450–561, 597–630, 660–707, 765–792, 979–1143, and 1217–1241; these read TTKH…RAAH, AEAV…RLQY, SFSV…AFHK, SELC…ICKN, WHRQ…EQLV, FKLE…MKKK, FTQR…KECV, and IMTL…LHTA. The interval 1306-1326 is disordered; the sequence is SSHSSPVTMSANANRPTQIGL.

This chain is Coiled-coil domain-containing protein 171 (CCDC171), found in Homo sapiens (Human).